The sequence spans 500 residues: NAD(P)H-quinone oxidoreductase chain 4, chloroplastic (500 aa).

14 consecutive transmembrane segments (helical) span residues 4-24 (FPWLTIIVVFPISAGSLMLFL), 35-55 (YTICICILELLLTTYAFCYNF), 87-107 (IGTILLTGFITTLATLAAFPV), 113-130 (LFHFLMLAMYSGQIGSFS), 134-154 (LLLFFIMWELELIPVYLLLSM), 167-187 (FILYTAGSSIFLLIGVLGISL), 211-231 (ILFYIGFLIAFAVKSPIIPLH), 242-262 (HYSTCMLLAGILLKMGAYGLV), 272-292 (AHSMFSPWLMVVGTIQIIYAA), 305-325 (IAYSSVSHMGFIIIGISSITD), 330-350 (GAILQIISHGFIGAALFFLAG), 386-406 (LALPGMSGFVAELIVFFGIIT), 416-436 (ILIIFVMAIGMILTPIYLLSM), and 462-482 (LFLSISILLPIIGIGIYPDFV).

Belongs to the complex I subunit 4 family.

The protein resides in the plastid. It is found in the chloroplast thylakoid membrane. The catalysed reaction is a plastoquinone + NADH + (n+1) H(+)(in) = a plastoquinol + NAD(+) + n H(+)(out). It carries out the reaction a plastoquinone + NADPH + (n+1) H(+)(in) = a plastoquinol + NADP(+) + n H(+)(out). The protein is NAD(P)H-quinone oxidoreductase chain 4, chloroplastic of Nasturtium officinale (Watercress).